The primary structure comprises 330 residues: Alpha-1,6-glucosyltransferase (330 aa).

This sequence belongs to the glycosyltransferase group 1 family. The cofactor is Does not require a metal cofactor..

It localises to the cytoplasm. The protein operates within protein modification; protein glycosylation. Its function is as follows. Catalyzes the transfer of a glucose moiety from UDP-glucose to another glucose that is N-linked to an asparagine within a peptide or protein. Can act in a repetitive manner, and this way it elongates the N-linked glucose by a glycan chain consisting of several alpha-1-&gt;6 linked glucose residues. Is able to add up to six glucose units in vitro. Cannot use UDP-Gal, UDP-GlcNAc or UDP-GalNAc as a substrate donor. In Actinobacillus pleuropneumoniae serotype 7 (strain AP76), this protein is Alpha-1,6-glucosyltransferase.